Here is a 121-residue protein sequence, read N- to C-terminus: Small ribosomal subunit protein uS13 (121 aa).

The tract at residues His91–Lys121 is disordered. The segment covering Ala106 to Lys121 has biased composition (basic residues).

The protein belongs to the universal ribosomal protein uS13 family. In terms of assembly, part of the 30S ribosomal subunit. Forms a loose heterodimer with protein S19. Forms two bridges to the 50S subunit in the 70S ribosome.

Functionally, located at the top of the head of the 30S subunit, it contacts several helices of the 16S rRNA. In the 70S ribosome it contacts the 23S rRNA (bridge B1a) and protein L5 of the 50S subunit (bridge B1b), connecting the 2 subunits; these bridges are implicated in subunit movement. Contacts the tRNAs in the A and P-sites. This is Small ribosomal subunit protein uS13 from Lysinibacillus sphaericus (strain C3-41).